We begin with the raw amino-acid sequence, 138 residues long: Large ribosomal subunit protein uL16 (138 aa).

Belongs to the universal ribosomal protein uL16 family. In terms of assembly, part of the 50S ribosomal subunit.

Binds 23S rRNA and is also seen to make contacts with the A and possibly P site tRNAs. This chain is Large ribosomal subunit protein uL16, found in Rubrobacter xylanophilus (strain DSM 9941 / JCM 11954 / NBRC 16129 / PRD-1).